Here is a 462-residue protein sequence, read N- to C-terminus: Argininosuccinate lyase (462 aa).

This sequence belongs to the lyase 1 family. Argininosuccinate lyase subfamily.

Its subcellular location is the cytoplasm. The enzyme catalyses 2-(N(omega)-L-arginino)succinate = fumarate + L-arginine. The protein operates within amino-acid biosynthesis; L-arginine biosynthesis; L-arginine from L-ornithine and carbamoyl phosphate: step 3/3. In Nitratiruptor sp. (strain SB155-2), this protein is Argininosuccinate lyase.